Reading from the N-terminus, the 775-residue chain is Ribonucleoside-diphosphate reductase large subunit (775 aa).

Substrate contacts are provided by residues Thr200, 215–216 (SC), Gly246, 427–431 (NLCTE), and 606–610 (PTVSS). A disulfide bond links Cys216 and Cys444. Catalysis depends on Asn427, which acts as the Proton acceptor. Cys429 acts as the Cysteine radical intermediate in catalysis. Glu431 (proton acceptor) is an active-site residue.

Belongs to the ribonucleoside diphosphate reductase large chain family. Heterotetramer composed of a homodimer of the large subunit (R1) and a homodimer of the small subunit (R2). Larger multisubunit protein complex are also active, composed of (R1)n(R2)n.

The enzyme catalyses a 2'-deoxyribonucleoside 5'-diphosphate + [thioredoxin]-disulfide + H2O = a ribonucleoside 5'-diphosphate + [thioredoxin]-dithiol. In terms of biological role, ribonucleoside-diphosphate reductase holoenzyme provides the precursors necessary for viral DNA synthesis. Allows virus growth in non-dividing cells, as well as reactivation from latency in infected hosts. Catalyzes the biosynthesis of deoxyribonucleotides from the corresponding ribonucleotides. The polypeptide is Ribonucleoside-diphosphate reductase large subunit (Homo sapiens (Human)).